A 533-amino-acid chain; its full sequence is Hydroxylamine reductase (533 aa).

Residues C3, C6, C15, and C21 each contribute to the [4Fe-4S] cluster site. Residues H234, E258, C302, C389, C417, C442, E476, and K478 each contribute to the hybrid [4Fe-2O-2S] cluster site. Position 389 is a cysteine persulfide (C389).

This sequence belongs to the HCP family. The cofactor is [4Fe-4S] cluster. Hybrid [4Fe-2O-2S] cluster is required as a cofactor.

The protein localises to the cytoplasm. It catalyses the reaction A + NH4(+) + H2O = hydroxylamine + AH2 + H(+). Its function is as follows. Catalyzes the reduction of hydroxylamine to form NH(3) and H(2)O. This chain is Hydroxylamine reductase, found in Maridesulfovibrio salexigens (strain ATCC 14822 / DSM 2638 / NCIMB 8403 / VKM B-1763) (Desulfovibrio salexigens).